A 562-amino-acid polypeptide reads, in one-letter code: Gut esterase 1 (562 aa).

An N-terminal signal peptide occupies residues 1 to 16; the sequence is MRIFLVSVILINACWA. Residue Asn73 is glycosylated (N-linked (GlcNAc...) asparagine; atypical). Cys75 and Cys93 form a disulfide bridge. Ser198 serves as the catalytic Acyl-ester intermediate. A disulfide bond links Cys250 and Cys258. Active-site charge relay system residues include Glu319 and His452. The Prevents secretion from ER motif lies at 559-562; it reads KDEL.

This sequence belongs to the type-B carboxylesterase/lipase family. In terms of tissue distribution, expressed only in the intestine.

The protein localises to the endoplasmic reticulum lumen. The catalysed reaction is a carboxylic ester + H2O = an alcohol + a carboxylate + H(+). This is Gut esterase 1 (ges-1) from Caenorhabditis elegans.